Reading from the N-terminus, the 219-residue chain is ATP-dependent Clp protease proteolytic subunit 1 (219 aa).

S113 functions as the Nucleophile in the catalytic mechanism. Residue H138 is part of the active site.

It belongs to the peptidase S14 family. Fourteen ClpP subunits assemble into 2 heptameric rings which stack back to back to give a disk-like structure with a central cavity, resembling the structure of eukaryotic proteasomes.

The protein resides in the cytoplasm. It catalyses the reaction Hydrolysis of proteins to small peptides in the presence of ATP and magnesium. alpha-casein is the usual test substrate. In the absence of ATP, only oligopeptides shorter than five residues are hydrolyzed (such as succinyl-Leu-Tyr-|-NHMec, and Leu-Tyr-Leu-|-Tyr-Trp, in which cleavage of the -Tyr-|-Leu- and -Tyr-|-Trp bonds also occurs).. Cleaves peptides in various proteins in a process that requires ATP hydrolysis. Has a chymotrypsin-like activity. Plays a major role in the degradation of misfolded proteins. Probably partially responsible for degradation of ECF sigma factor SigR prime. The protein is ATP-dependent Clp protease proteolytic subunit 1 of Streptomyces coelicolor (strain ATCC BAA-471 / A3(2) / M145).